Reading from the N-terminus, the 340-residue chain is Entry-fusion complex protein OPG094 (340 aa).

Residue G2 is the site of N-myristoyl glycine; by host attachment. Topologically, residues 2 to 319 (GGRVSVELPK…VQHNIKHSFD (318 aa)) are virion surface. Residues 320–340 (LKLHLISLLSLLVIWILIVAI) traverse the membrane as a helical; Signal-anchor for type II membrane protein segment.

It belongs to the orthopoxvirus OPG086 family. As to quaternary structure, interacts with OPG143. Component of the entry fusion complex (EFC) composed of OPG053, OPG076, OPG086, OPG094, OPG095, OPG099, OPG107, OPG143, OPG104, OPG147 and OPG155. Except for OPG095 and OPG053, each of the EFC proteins is required for assembly or stability of the complex. Unglycosylated because produced in viral factories instead of the classic ER -Golgi route.

The protein resides in the virion membrane. Functionally, component of the entry fusion complex (EFC), which consists of 11 proteins. During cell infection, this complex mediates entry of the virion core into the host cytoplasm by a two-step mechanism consisting of lipid mixing of the viral and cellular membranes and subsequent pore formation. The chain is Entry-fusion complex protein OPG094 (OPG094) from Homo sapiens (Human).